A 312-amino-acid polypeptide reads, in one-letter code: Non-structural protein 2 (312 aa).

ATP is bound by residues 107–109 (QVR), lysine 185, and 218–220 (HGK). The segment at 202–238 (FAAYIRYNFNKFAAISHGKRHWRLVLHSQLMSHAERL) is RNA-binding. Histidine 222 acts as the For NTPase and RTPase activities in catalysis. ATP is bound at residue arginine 224.

This sequence belongs to the rotavirus NSP2 family. In terms of assembly, homooctamer. Interacts with VP1; this interaction is weak. Interacts with NSP5; this interaction leads to up-regulation of NSP5 phosphorylation and formation of viral factories. Interacts with host DCP1A, DCP1B, DDX6, EDC4 and EIF2S1/eIF2-alpha; these interactions are probably part of the sequestration of some host SGs and PBs proteins in viral factories. Mg(2+) is required as a cofactor.

Its subcellular location is the host cytoplasm. Functionally, participates in replication and packaging of the viral genome. Plays a crucial role, together with NSP5, in the formation of virus factories (viroplasms), which are large inclusions in the host cytoplasm where replication intermediates are assembled and viral RNA replication takes place. Displays ssRNA binding, NTPase, RNA triphosphatase (RTPase) and ATP-independent helix-unwinding activities. The unwinding activity may prepare and organize plus-strand RNAs for packaging and replication by removing interfering secondary structures. The RTPase activity plays a role in the removal of the gamma-phosphate from the rotavirus RNA minus strands of dsRNA genome segments. Participates in the selective exclusion of host proteins from stress granules (SG) and P bodies (PB). Also participates in the sequestration of these remodeled organelles in viral factories. This Rotavirus C (isolate RVC/Human/United Kingdom/Bristol/1989) (RV-C) protein is Non-structural protein 2.